The chain runs to 139 residues: D-ribose pyranase (139 aa).

The active-site Proton donor is H20. Substrate-binding positions include D28, H106, and Y128–N130.

Belongs to the RbsD / FucU family. RbsD subfamily. In terms of assembly, homodecamer.

It is found in the cytoplasm. The catalysed reaction is beta-D-ribopyranose = beta-D-ribofuranose. The protein operates within carbohydrate metabolism; D-ribose degradation; D-ribose 5-phosphate from beta-D-ribopyranose: step 1/2. Its function is as follows. Catalyzes the interconversion of beta-pyran and beta-furan forms of D-ribose. This Actinobacillus succinogenes (strain ATCC 55618 / DSM 22257 / CCUG 43843 / 130Z) protein is D-ribose pyranase.